The primary structure comprises 587 residues: Polyphenol oxidase E, chloroplastic (587 aa).

A chloroplast-targeting transit peptide spans 1–87 (MSSSSSITTT…AANLAPLATA (87 aa)). 2 disulfide bridges follow: C98/C114 and C113/C180. Residues H179, H197, H206, H328, H332, and H363 each coordinate Cu cation. A cross-link (2'-(S-cysteinyl)-histidine (Cys-His)) is located at residues 183-197 (CNGAYKVGGKELQVH).

Belongs to the tyrosinase family. The cofactor is Cu(2+).

It is found in the plastid. It localises to the chloroplast thylakoid lumen. The enzyme catalyses 2 catechol + O2 = 2 1,2-benzoquinone + 2 H2O. Catalyzes the oxidation of mono- and o-diphenols to o-diquinones. In Solanum lycopersicum (Tomato), this protein is Polyphenol oxidase E, chloroplastic.